The following is a 335-amino-acid chain: GTPase Obg (335 aa).

The Obg domain occupies 1–159 (MQFIDRSEIE…RKLLLELKLL (159 aa)). One can recognise an OBG-type G domain in the interval 160 to 328 (AEVGIIGLPN…LLARVWQVLE (169 aa)). GTP is bound by residues 166 to 173 (GLPNAGKS), 191 to 195 (FTTLV), 213 to 216 (DIPG), 280 to 283 (NKAD), and 309 to 311 (SAA). The Mg(2+) site is built by Ser173 and Thr193.

Belongs to the TRAFAC class OBG-HflX-like GTPase superfamily. OBG GTPase family. As to quaternary structure, monomer. The cofactor is Mg(2+).

It localises to the cytoplasm. Functionally, an essential GTPase which binds GTP, GDP and possibly (p)ppGpp with moderate affinity, with high nucleotide exchange rates and a fairly low GTP hydrolysis rate. Plays a role in control of the cell cycle, stress response, ribosome biogenesis and in those bacteria that undergo differentiation, in morphogenesis control. The polypeptide is GTPase Obg (Gloeobacter violaceus (strain ATCC 29082 / PCC 7421)).